The following is a 510-amino-acid chain: Transcriptional regulatory protein GAT1 (510 aa).

S167 is subject to Phosphoserine. Residues 220–256 (NHSHNSSHNNNSPSIANNTNANTNTNTSASTNTNSPL) show a composition bias toward low complexity. Disordered regions lie at residues 220 to 311 (NHSH…IKCS) and 358 to 383 (QRSS…AAGK). 2 positions are modified to phosphoserine: S262 and S270. The span at 274 to 287 (SSVRKKKPALKKIK) shows a compositional bias: basic residues. A compositionally biased stretch (low complexity) spans 294-306 (SSATPPSNTSSNP). A GATA-type zinc finger spans residues 310–334 (CSNCTTSTTPLWRKDPKGLPLCNAC). Residue T369 is modified to Phosphothreonine. Residues S399 and S418 each carry the phosphoserine modification.

It is found in the nucleus. Its function is as follows. Positive regulator of multiple nitrogen catabolic genes. This chain is Transcriptional regulatory protein GAT1 (GAT1), found in Saccharomyces cerevisiae (strain ATCC 204508 / S288c) (Baker's yeast).